A 100-amino-acid polypeptide reads, in one-letter code: Urease subunit gamma (100 aa).

The protein belongs to the urease gamma subunit family. As to quaternary structure, heterotrimer of UreA (gamma), UreB (beta) and UreC (alpha) subunits. Three heterotrimers associate to form the active enzyme.

Its subcellular location is the cytoplasm. It catalyses the reaction urea + 2 H2O + H(+) = hydrogencarbonate + 2 NH4(+). The protein operates within nitrogen metabolism; urea degradation; CO(2) and NH(3) from urea (urease route): step 1/1. This Synechococcus sp. (strain RCC307) protein is Urease subunit gamma.